Here is a 683-residue protein sequence, read N- to C-terminus: Phosphomethylpyrimidine synthase (683 aa).

Substrate-binding positions include Asn235, Met264, Tyr293, His329, 349 to 351, 390 to 393, and Glu429; these read SRG and DGMR. Residue His433 coordinates Zn(2+). Tyr456 is a binding site for substrate. His497 is a Zn(2+) binding site. Residues Cys577, Cys580, and Cys585 each coordinate [4Fe-4S] cluster. The interval 647–683 is disordered; it reads RQSPGVESTSLESTSLESTVLESTSLESTALEKAKEV. Over residues 653-675 the composition is skewed to low complexity; the sequence is ESTSLESTSLESTVLESTSLEST.

Belongs to the ThiC family. Homodimer. It depends on [4Fe-4S] cluster as a cofactor.

The catalysed reaction is 5-amino-1-(5-phospho-beta-D-ribosyl)imidazole + S-adenosyl-L-methionine = 4-amino-2-methyl-5-(phosphooxymethyl)pyrimidine + CO + 5'-deoxyadenosine + formate + L-methionine + 3 H(+). Its pathway is cofactor biosynthesis; thiamine diphosphate biosynthesis. Its function is as follows. Catalyzes the synthesis of the hydroxymethylpyrimidine phosphate (HMP-P) moiety of thiamine from aminoimidazole ribotide (AIR) in a radical S-adenosyl-L-methionine (SAM)-dependent reaction. The protein is Phosphomethylpyrimidine synthase of Shewanella loihica (strain ATCC BAA-1088 / PV-4).